We begin with the raw amino-acid sequence, 467 residues long: Pachytene checkpoint protein 2 homolog (467 aa).

209–216 (GPPGTGKT) serves as a coordination point for ATP.

The protein belongs to the AAA ATPase family. PCH2 subfamily.

The protein localises to the chromosome. Functionally, plays a key role in chromosome recombination during meiosis. Mediates meiotic chromosome remodeling and crossover maturation. The sequence is that of Pachytene checkpoint protein 2 homolog from Arabidopsis thaliana (Mouse-ear cress).